A 640-amino-acid polypeptide reads, in one-letter code: Chaperone protein DnaK (640 aa).

Phosphothreonine; by autocatalysis is present on Thr196. Over residues 547–569 (GDKIPSDKRPALEGALEKLKDAT) the composition is skewed to basic and acidic residues. 2 disordered regions span residues 547 to 575 (GDKI…GTTE) and 595 to 640 (LYQA…GNGK). Over residues 603–615 (TNASEPTQNTDGS) the composition is skewed to polar residues. A compositionally biased stretch (acidic residues) spans 625-634 (GEVENAEFEV).

Belongs to the heat shock protein 70 family.

Functionally, acts as a chaperone. The sequence is that of Chaperone protein DnaK from Chlorobium phaeobacteroides (strain DSM 266 / SMG 266 / 2430).